The sequence spans 270 residues: Putative pyruvate, phosphate dikinase regulatory protein 2 (270 aa).

151–158 provides a ligand contact to ADP; sequence GVSRTSKT.

This sequence belongs to the pyruvate, phosphate/water dikinase regulatory protein family. PDRP subfamily.

The catalysed reaction is N(tele)-phospho-L-histidyl/L-threonyl-[pyruvate, phosphate dikinase] + ADP = N(tele)-phospho-L-histidyl/O-phospho-L-threonyl-[pyruvate, phosphate dikinase] + AMP + H(+). It catalyses the reaction N(tele)-phospho-L-histidyl/O-phospho-L-threonyl-[pyruvate, phosphate dikinase] + phosphate + H(+) = N(tele)-phospho-L-histidyl/L-threonyl-[pyruvate, phosphate dikinase] + diphosphate. Bifunctional serine/threonine kinase and phosphorylase involved in the regulation of the pyruvate, phosphate dikinase (PPDK) by catalyzing its phosphorylation/dephosphorylation. The polypeptide is Putative pyruvate, phosphate dikinase regulatory protein 2 (Listeria monocytogenes serovar 1/2a (strain ATCC BAA-679 / EGD-e)).